The sequence spans 436 residues: UPF0597 protein YhaM (436 aa).

The protein belongs to the UPF0597 family.

The protein is UPF0597 protein YhaM of Shigella boydii serotype 18 (strain CDC 3083-94 / BS512).